The sequence spans 420 residues: Probable endo-beta-1,4-glucanase celB (420 aa).

The signal sequence occupies residues 1–18 (MLRKLTPLALALLPLVAG). Asn-118 carries N-linked (GlcNAc...) asparagine glycosylation. Glu-215 acts as the Nucleophile in catalysis. Residue Glu-220 is the Proton donor of the active site. Residues Asn-234, Asn-293, and Asn-383 are each glycosylated (N-linked (GlcNAc...) asparagine).

The protein belongs to the glycosyl hydrolase 7 (cellulase C) family.

It is found in the secreted. It catalyses the reaction Endohydrolysis of (1-&gt;4)-beta-D-glucosidic linkages in cellulose, lichenin and cereal beta-D-glucans.. Has endoglucanase activity on substrates containing beta-1,4 glycosidic bonds, like in carboxymethylcellulose (CMC), hydroxyethylcellulose (HEC) and beta-glucan. Involved in the degradation of complex natural cellulosic substrates. The chain is Probable endo-beta-1,4-glucanase celB (celB) from Aspergillus terreus (strain NIH 2624 / FGSC A1156).